The primary structure comprises 324 residues: Olfactory receptor 7G2 (324 aa).

The Extracellular segment spans residues 1-25 (MEARNQTAISKFLLLGLIEDPELQP). Asn-5 carries N-linked (GlcNAc...) asparagine glycosylation. Residues 26 to 46 (VLFSLFLSMYLVTILGNLLIL) form a helical membrane-spanning segment. At 47 to 54 (LAVISDSH) the chain is on the cytoplasmic side. Residues 55–75 (LHTPMYFFLSNLSFLDICLST) form a helical membrane-spanning segment. Topologically, residues 76–99 (TTIPKMLVNIQAQNRSITYSGCLT) are extracellular. N-linked (GlcNAc...) asparagine glycosylation is present at Asn-89. Cys-97 and Cys-189 are joined by a disulfide. A helical transmembrane segment spans residues 100-120 (QICFVLFFAGLENCLLAAMAY). Over 121 to 139 (DRYVAICHPLRYTVIMNPR) the chain is Cytoplasmic. The helical transmembrane segment at 140 to 160 (LCGLLILLSLLTSVVNALLLS) threads the bilayer. Over 161–197 (LMVLRLSFCTDLEIPLFFCELAQVIQLTCSDTLINNI) the chain is Extracellular. A helical transmembrane segment spans residues 198-217 (LIYFAACIFGGVPLSGIILS). Residues 218 to 237 (YTQITSCVLRMPSASGKHKA) lie on the Cytoplasmic side of the membrane. Residues 238–258 (VSTCGSHLSIVLLFYGAGLGV) form a helical membrane-spanning segment. Residues 259 to 271 (YISSVVTDSPRKT) lie on the Extracellular side of the membrane. A helical transmembrane segment spans residues 272–292 (AVASVMYSVFPQMVNPFIYSL). Topologically, residues 293 to 324 (RNKDMKGTLRKFIGRIPSLLWCAICFGFRFLE) are cytoplasmic.

This sequence belongs to the G-protein coupled receptor 1 family.

It localises to the cell membrane. In terms of biological role, odorant receptor. The chain is Olfactory receptor 7G2 (OR7G2) from Homo sapiens (Human).